The following is a 154-amino-acid chain: Small ribosomal subunit protein bS16 (154 aa).

A compositionally biased stretch (low complexity) spans 111–121 (AAAGLAEAPTK). The segment at 111 to 154 (AAAGLAEAPTKPAKKAAKAEAAPKTDEAAPKTEEQAGAGSGEQG) is disordered. The segment covering 127-144 (AKAEAAPKTDEAAPKTEE) has biased composition (basic and acidic residues).

Belongs to the bacterial ribosomal protein bS16 family.

The sequence is that of Small ribosomal subunit protein bS16 from Salinispora tropica (strain ATCC BAA-916 / DSM 44818 / JCM 13857 / NBRC 105044 / CNB-440).